Consider the following 354-residue polypeptide: MLARVWVRGLAATKKKPQVLVKDGPSLQDFISSASVAEAVEKYEGKLKLEKGDRRLRLPPWLKKEKILPSENENVSRLKKQLKHLKLATVCQEARCPNLGECWGGSDDSLATATIMLMGDTCTRGCKFCSVKTARAPPPLDPMEPENTSTAVASWGVEYIVLTSVDRDDLPDGGADHLRKTVQLMKLKKPELLIECLLPDFAGDKISVEKMATSGLDVYAHNIETVERLTPWVRDPRAKYRQSLDALRYAKEVSPKLITKTSIMLGLGEAEDEIKQCLADLRASNVDVVTFGQYMQPTKRHLLVKEWVTPEKFDQWAEYSKKLGFLYVASGPLVRSSYKAGEFYLKNVLRNRQN.

7 residues coordinate [4Fe-4S] cluster: Cys91, Cys96, Cys102, Cys122, Cys126, Cys129, and Ser337. A Radical SAM core domain is found at 107-326 (DDSLATATIM…AEYSKKLGFL (220 aa)).

It belongs to the radical SAM superfamily. Lipoyl synthase family. Requires [4Fe-4S] cluster as cofactor.

Its subcellular location is the mitochondrion. The catalysed reaction is [[Fe-S] cluster scaffold protein carrying a second [4Fe-4S](2+) cluster] + N(6)-octanoyl-L-lysyl-[protein] + 2 oxidized [2Fe-2S]-[ferredoxin] + 2 S-adenosyl-L-methionine + 4 H(+) = [[Fe-S] cluster scaffold protein] + N(6)-[(R)-dihydrolipoyl]-L-lysyl-[protein] + 4 Fe(3+) + 2 hydrogen sulfide + 2 5'-deoxyadenosine + 2 L-methionine + 2 reduced [2Fe-2S]-[ferredoxin]. The protein operates within protein modification; protein lipoylation via endogenous pathway; protein N(6)-(lipoyl)lysine from octanoyl-[acyl-carrier-protein]: step 2/2. Catalyzes the radical-mediated insertion of two sulfur atoms into the C-6 and C-8 positions of the octanoyl moiety bound to the lipoyl domains of lipoate-dependent enzymes, thereby converting the octanoylated domains into lipoylated derivatives. This is Lipoyl synthase, mitochondrial from Caenorhabditis elegans.